A 545-amino-acid polypeptide reads, in one-letter code: CTP synthase (545 aa).

An amidoligase domain region spans residues 1 to 266; the sequence is MATNYIFVTG…DDIVTKRFNL (266 aa). Residue S14 participates in CTP binding. S14 is a UTP binding site. Residues 15–20 and D72 each bind ATP; that span reads SLGKGI. Mg(2+) contacts are provided by D72 and E140. Residues 147-149, 187-192, and K223 contribute to the CTP site; these read DIE and KTKPTQ. UTP is bound by residues 187 to 192 and K223; that span reads KTKPTQ. ATP is bound at residue 239–241; that stretch reads RDV. Positions 291–542 constitute a Glutamine amidotransferase type-1 domain; sequence TVGFVGKYVE…IEAAGEFHKE (252 aa). L-glutamine is bound at residue G352. C379 functions as the Nucleophile; for glutamine hydrolysis in the catalytic mechanism. Residues 380–383, E403, and R470 each bind L-glutamine; that span reads LGMQ. Residues H515 and E517 contribute to the active site.

The protein belongs to the CTP synthase family. In terms of assembly, homotetramer.

The enzyme catalyses UTP + L-glutamine + ATP + H2O = CTP + L-glutamate + ADP + phosphate + 2 H(+). The catalysed reaction is L-glutamine + H2O = L-glutamate + NH4(+). It catalyses the reaction UTP + NH4(+) + ATP = CTP + ADP + phosphate + 2 H(+). The protein operates within pyrimidine metabolism; CTP biosynthesis via de novo pathway; CTP from UDP: step 2/2. Allosterically activated by GTP, when glutamine is the substrate; GTP has no effect on the reaction when ammonia is the substrate. The allosteric effector GTP functions by stabilizing the protein conformation that binds the tetrahedral intermediate(s) formed during glutamine hydrolysis. Inhibited by the product CTP, via allosteric rather than competitive inhibition. Functionally, catalyzes the ATP-dependent amination of UTP to CTP with either L-glutamine or ammonia as the source of nitrogen. Regulates intracellular CTP levels through interactions with the four ribonucleotide triphosphates. The chain is CTP synthase from Idiomarina loihiensis (strain ATCC BAA-735 / DSM 15497 / L2-TR).